A 76-amino-acid chain; its full sequence is DNA-directed RNA polymerase subunit epsilon (76 aa).

The protein belongs to the RNA polymerase subunit epsilon family. In terms of assembly, RNAP is composed of a core of 2 alpha, a beta and a beta' subunit. The core is associated with a delta subunit, and at least one of epsilon or omega. When a sigma factor is associated with the core the holoenzyme is formed, which can initiate transcription.

It carries out the reaction RNA(n) + a ribonucleoside 5'-triphosphate = RNA(n+1) + diphosphate. Functionally, a non-essential component of RNA polymerase (RNAP). The protein is DNA-directed RNA polymerase subunit epsilon of Streptococcus pyogenes serotype M1.